Reading from the N-terminus, the 410-residue chain is Cysteine desulfurase IscS (410 aa).

Pyridoxal 5'-phosphate-binding positions include Ala-80 to Thr-81, Asn-160, Gln-188, and Ser-208 to His-210. Lys-211 bears the N6-(pyridoxal phosphate)lysine mark. Thr-248 serves as a coordination point for pyridoxal 5'-phosphate. Cys-334 serves as the catalytic Cysteine persulfide intermediate. Residue Cys-334 coordinates [2Fe-2S] cluster.

The protein belongs to the class-V pyridoxal-phosphate-dependent aminotransferase family. NifS/IscS subfamily. Homodimer. Forms a heterotetramer with IscU, interacts with other sulfur acceptors. It depends on pyridoxal 5'-phosphate as a cofactor.

The protein localises to the cytoplasm. The enzyme catalyses (sulfur carrier)-H + L-cysteine = (sulfur carrier)-SH + L-alanine. It participates in cofactor biosynthesis; iron-sulfur cluster biosynthesis. Its function is as follows. Master enzyme that delivers sulfur to a number of partners involved in Fe-S cluster assembly, tRNA modification or cofactor biosynthesis. Catalyzes the removal of elemental sulfur atoms from cysteine to produce alanine. Functions as a sulfur delivery protein for Fe-S cluster synthesis onto IscU, an Fe-S scaffold assembly protein, as well as other S acceptor proteins. The sequence is that of Cysteine desulfurase IscS from Rickettsia prowazekii (strain Madrid E).